A 424-amino-acid polypeptide reads, in one-letter code: Tyrosine--tRNA ligase (424 aa).

Tyr-33 lines the L-tyrosine pocket. The 'HIGH' region motif lies at 38 to 47 (PSADSLHIGH). Tyr-170 and Gln-174 together coordinate L-tyrosine. The 'KMSKS' region motif lies at 230 to 234 (KFGKT). Lys-233 is a binding site for ATP. One can recognise an S4 RNA-binding domain in the interval 357 to 424 (MSLIDALVRC…RRHYHLIRLV (68 aa)).

The protein belongs to the class-I aminoacyl-tRNA synthetase family. TyrS type 1 subfamily. Homodimer.

The protein localises to the cytoplasm. The enzyme catalyses tRNA(Tyr) + L-tyrosine + ATP = L-tyrosyl-tRNA(Tyr) + AMP + diphosphate + H(+). Catalyzes the attachment of tyrosine to tRNA(Tyr) in a two-step reaction: tyrosine is first activated by ATP to form Tyr-AMP and then transferred to the acceptor end of tRNA(Tyr). This chain is Tyrosine--tRNA ligase, found in Roseiflexus castenholzii (strain DSM 13941 / HLO8).